We begin with the raw amino-acid sequence, 77 residues long: Apelin (77 aa).

An N-terminal signal peptide occupies residues 1–22 (MNLRLCVQALLLLWLSLTAVCG). Positions 23–41 (GSLMPLPDGNGLEDGNVRH) are excised as a propeptide. Residues 43–77 (VQPRGSRNGPGPWQGGRRKFRRQRPRLSHKGPMPF) are disordered. Over residues 58-71 (GRRKFRRQRPRLSH) the composition is skewed to basic residues.

The protein belongs to the apelin family. Several active peptides may be produced by proteolytic processing of the peptide precursor. In terms of tissue distribution, expressed in the brain with highest levels in the frontal cortex, thalamus, hypothalamus and midbrain. Secreted by the mammary gland into the colostrum and the milk.

It localises to the secreted. It is found in the extracellular space. Functionally, peptide hormone that functions as endogenous ligand for the G-protein-coupled apelin receptor (APLNR/APJ), that plays a role in cadiovascular homeostasis. Functions as a balanced agonist activating both G(i) protein pathway and beta-arrestin pathway of APLNR. Downstream G proteins activation, apelin can inhibit cAMP production and activate key intracellular effectors such as ERKs. On the other hand, APLNR activation induces beta-arrestin recruitment to the membrane leading to desensitization and internalization of the receptor. Apelin blunts cardiac hypertrophic induction from APLNR on response to pathological stimuli, but also induces myocardial hypertrophy under normal conditions. Apelin-36 dissociates more hardly than (pyroglu)apelin-13 from APLNR. Involved in the regulation of cardiac precursor cell movements during gastrulation and heart morphogenesis. Has an inhibitory effect on cytokine production in response to T-cell receptor/CD3 cross-linking; the oral intake of apelin in the colostrum and the milk might therefore modulate immune responses in neonates. Plays a role in early coronary blood vessels formation. Mediates myocardial contractility in an ERK1/2-dependent manner. May also have a role in the central control of body fluid homeostasis by influencing vasopressin release and drinking behavior. (Microbial infection) Endogenous ligand for the apelin receptor (APLNR), an alternative coreceptor with CD4 for HIV-1 infection. Inhibits HIV-1 entry in cells coexpressing CD4 and APLNR. Apelin-36 has a greater inhibitory activity on HIV infection than other synthetic apelin derivatives. This chain is Apelin, found in Homo sapiens (Human).